The chain runs to 293 residues: Aromatic amino acid exporter YddG (293 aa).

Over 1–6 the chain is Cytoplasmic; that stretch reads MTRQKA. In terms of domain architecture, EamA 1 spans 6–137; it reads ATLIGLIAIV…LALVGVCWVL (132 aa). Residues 7–27 traverse the membrane as a helical segment; sequence TLIGLIAIVLWSTMVGLIRGV. The Periplasmic segment spans residues 28–33; sequence SEGLGP. Residues 34–54 traverse the membrane as a helical segment; sequence VGGAAAIYSLSGLLLIFTVGF. Topologically, residues 55–62 are cytoplasmic; it reads PRIRQIPK. Residues 63-83 form a helical membrane-spanning segment; it reads GYLLAGSLLFVSYEICLALSL. Topologically, residues 84–92 are periplasmic; the sequence is GYAATHHQA. Residues 93–113 traverse the membrane as a helical segment; it reads IEVGMVNYLWPSLTILFAILF. Residues 114–118 are Cytoplasmic-facing; that stretch reads NGQKT. Residues 119-139 traverse the membrane as a helical segment; the sequence is NWLIVPGLLLALVGVCWVLGG. Residues 140–155 are Periplasmic-facing; the sequence is DNGLHYDEIINNITTS. Residues 156 to 176 form a helical membrane-spanning segment; that stretch reads PLSYFLAFIGAFIWAAYCTVT. Residues 158-285 form the EamA 2 domain; the sequence is SYFLAFIGAF…ALMVCGGSLL (128 aa). Over 177-182 the chain is Cytoplasmic; that stretch reads NKYARG. A helical transmembrane segment spans residues 183–203; sequence FNGITVFVLLTGASLWVYYFL. Residues 204–218 are Periplasmic-facing; the sequence is TPQPEMIFSTPVMIK. Residues 219 to 239 form a helical membrane-spanning segment; sequence LISAAFTLGFAYAAWNVGILH. Over 240 to 243 the chain is Cytoplasmic; that stretch reads GNVT. A helical membrane pass occupies residues 244–264; it reads IMAVGSYFTPVLSSALAAVLL. Residues 265–267 are Periplasmic-facing; that stretch reads SAP. A helical membrane pass occupies residues 268–288; sequence LSFSFWQGALMVCGGSLLCWL. The Cytoplasmic portion of the chain corresponds to 289–293; sequence ATRRG.

The protein belongs to the drug/metabolite transporter (DMT) superfamily. Aromatic amino acid/paraquat exporter (ArAA/P-E) (TC 2.A.7.17) family.

Its subcellular location is the cell inner membrane. The enzyme catalyses L-phenylalanine(in) = L-phenylalanine(out). It carries out the reaction L-tyrosine(in) = L-tyrosine(out). The catalysed reaction is L-tryptophan(in) = L-tryptophan(out). It catalyses the reaction L-threonine(in) = L-threonine(out). The enzyme catalyses L-methionine(in) = L-methionine(out). It carries out the reaction L-lysine(in) = L-lysine(out). The catalysed reaction is L-glutamate(out) = L-glutamate(in). It catalyses the reaction L-valine(in) = L-valine(out). The enzyme catalyses L-isoleucine(in) = L-isoleucine(out). In terms of biological role, amino acid transporter with broad substrate specificity. Can transport various amino acids, including phenylalanine, tyrosine, tryptophan, L-threonine, L-methionine, L-lysine, L-glutamate, L-valine and L-isoleucine. Overexpression confers resistance to phenylalanine and increases export of phenylalanine, tyrosine and tryptophan. This Escherichia coli (strain K12) protein is Aromatic amino acid exporter YddG (yddG).